A 231-amino-acid polypeptide reads, in one-letter code: Octanoyltransferase (231 aa).

The 183-residue stretch at Ser49–Ser231 folds into the BPL/LPL catalytic domain. Residues Arg87–His94, Ala162–Gly164, and Gly175–Ser177 contribute to the substrate site. Cys193 serves as the catalytic Acyl-thioester intermediate.

The protein belongs to the LipB family.

The protein resides in the cytoplasm. The catalysed reaction is octanoyl-[ACP] + L-lysyl-[protein] = N(6)-octanoyl-L-lysyl-[protein] + holo-[ACP] + H(+). It functions in the pathway protein modification; protein lipoylation via endogenous pathway; protein N(6)-(lipoyl)lysine from octanoyl-[acyl-carrier-protein]: step 1/2. Its function is as follows. Catalyzes the transfer of endogenously produced octanoic acid from octanoyl-acyl-carrier-protein onto the lipoyl domains of lipoate-dependent enzymes. Lipoyl-ACP can also act as a substrate although octanoyl-ACP is likely to be the physiological substrate. The sequence is that of Octanoyltransferase from Nitrobacter winogradskyi (strain ATCC 25391 / DSM 10237 / CIP 104748 / NCIMB 11846 / Nb-255).